The chain runs to 224 residues: Large ribosomal subunit protein uL1 (224 aa).

It belongs to the universal ribosomal protein uL1 family. As to quaternary structure, part of the 50S ribosomal subunit.

In terms of biological role, binds directly to 23S rRNA. The L1 stalk is quite mobile in the ribosome, and is involved in E site tRNA release. Its function is as follows. Protein L1 is also a translational repressor protein, it controls the translation of the L11 operon by binding to its mRNA. This Borrelia hermsii (strain HS1 / DAH) protein is Large ribosomal subunit protein uL1.